Here is a 605-residue protein sequence, read N- to C-terminus: MSWGTELWDQFDSLDKHTQWGIDFLERYAKFVKERIEIEQNYAKQLRNLVKKYCPKRSSKDEEPRFTSCVAFFNILNELNDYAGQREVVAEEMAHRVYGELMRYAHDLKTERKMHLQEGRKAQQYLDMCWKQMDNSKKKFERECREAEKAQQSYERLDNDTNATKADVEKAKQQLNLRTHMADENKNEYAAQLQNFNGEQHKHFYVVIPQIYKQLQEMDERRTIKLSECYRGFADSERKVIPIISKCLEGMILAAKSVDERRDSQMVVDSFKSGFEPPGDFPFEDYSQHIYRTISDGTISASKQESGKMDAKTTVGKAKGKLWLFGKKPKPQSPPLTPTSLFTSSTPNGSQFLTFSIEPVHYCMNEIKTGKPRIPSFRSLKRGWSVKMGPALEDFSHLPPEQRRKKLQQRIDELNRELQKESDQKDALNKMKDVYEKNPQMGDPGSLQPKLAETMNNIDRLRMEIHKNEAWLSEVEGKTGGRGDRRHSSDINHLVTQGRESPEGSYTDDANQEVRGPPQQHGHHNEFDDEFEDDDPLPAIGHCKAIYPFDGHNEGTLAMKEGEVLYIIEEDKGDGWTRARRQNGEEGYVPTSYIDVTLEKNSKGS.

The F-BAR domain maps to 1-263; that stretch reads MSWGTELWDQ…AAKSVDERRD (263 aa). Positions 66-258 form a coiled coil; sequence FTSCVAFFNI…EGMILAAKSV (193 aa). An interaction with CDC42 region spans residues 245–535; the sequence is SKCLEGMILA…EFDDEFEDDD (291 aa). Phosphoserine is present on Ser-295. Positions 392-484 form a coiled coil; the sequence is LEDFSHLPPE…VEGKTGGRGD (93 aa). Positions 397 to 474 constitute an REM-1 domain; that stretch reads HLPPEQRRKK…IHKNEAWLSE (78 aa). Positions 476–490 are enriched in basic and acidic residues; the sequence is EGKTGGRGDRRHSSD. The segment at 476-539 is disordered; it reads EGKTGGRGDR…EFEDDDPLPA (64 aa). Ser-488, Ser-501, and Ser-505 each carry phosphoserine. An interaction with DNM1 region spans residues 522 to 605; it reads GHHNEFDDEF…VTLEKNSKGS (84 aa). Acidic residues predominate over residues 527–536; the sequence is FDDEFEDDDP. The SH3 domain maps to 538 to 599; the sequence is PAIGHCKAIY…PTSYIDVTLE (62 aa). The interaction with DNM2 and WASL stretch occupies residues 541–597; the sequence is GHCKAIYPFDGHNEGTLAMKEGEVLYIIEEDKGDGWTRARRQNGEEGYVPTSYIDVT. The interval 541–605 is interaction with DAAM1, DIAPH1 and DIAPH2; it reads GHCKAIYPFD…VTLEKNSKGS (65 aa).

The protein belongs to the FNBP1 family. Homodimerizes, the dimers can polymerize end-to-end to form filamentous structures. Interacts with GTP-bound CDC42. Interacts with DAAM1, DIAPH1, DIAPH2, DNM1, DNM2 and WASL/N-WASP. Interacts with ATG3. Interacts (via SH3 domain) with ABI1, WASF2, CDC42 and WIPF1.

Its subcellular location is the cytoplasm. It localises to the cytoskeleton. It is found in the cell cortex. The protein localises to the cytoplasmic vesicle. The protein resides in the cell membrane. Functionally, required to coordinate membrane tubulation with reorganization of the actin cytoskeleton during endocytosis. May bind to lipids such as phosphatidylinositol 4,5-bisphosphate and phosphatidylserine and promote membrane invagination and the formation of tubules. Also promotes CDC42-induced actin polymerization by activating the WASL/N-WASP-WASPIP/WIP complex, the predominant form of WASL/N-WASP in cells. Actin polymerization may promote the fission of membrane tubules to form endocytic vesicles. Essential for autophagy of intracellular bacterial pathogens. This chain is Formin-binding protein 1-like (FNBP1L), found in Homo sapiens (Human).